Consider the following 150-residue polypeptide: Large ribosomal subunit protein bL9 (150 aa).

This sequence belongs to the bacterial ribosomal protein bL9 family.

Binds to the 23S rRNA. This Sodalis glossinidius (strain morsitans) protein is Large ribosomal subunit protein bL9.